Here is a 469-residue protein sequence, read N- to C-terminus: Siroheme synthase (469 aa).

Residues 1-211 (MSTQLQTWDF…GRTDKARAML (211 aa)) are precorrin-2 dehydrogenase /sirohydrochlorin ferrochelatase. NAD(+) is bound by residues 29–30 (EQ) and 50–51 (DP). A Phosphoserine modification is found at S136. The segment at 227-469 (GEVYLVGAGP…TLRDRLRWMD (243 aa)) is uroporphyrinogen-III C-methyltransferase. P236 is a binding site for S-adenosyl-L-methionine. Residue D259 is the Proton acceptor of the active site. K281 serves as the catalytic Proton donor. S-adenosyl-L-methionine-binding positions include 312–314 (GGD), I317, 342–343 (TA), M394, and G423.

The protein in the N-terminal section; belongs to the precorrin-2 dehydrogenase / sirohydrochlorin ferrochelatase family. This sequence in the C-terminal section; belongs to the precorrin methyltransferase family.

The catalysed reaction is uroporphyrinogen III + 2 S-adenosyl-L-methionine = precorrin-2 + 2 S-adenosyl-L-homocysteine + H(+). The enzyme catalyses precorrin-2 + NAD(+) = sirohydrochlorin + NADH + 2 H(+). It catalyses the reaction siroheme + 2 H(+) = sirohydrochlorin + Fe(2+). Its pathway is cofactor biosynthesis; adenosylcobalamin biosynthesis; precorrin-2 from uroporphyrinogen III: step 1/1. It participates in cofactor biosynthesis; adenosylcobalamin biosynthesis; sirohydrochlorin from precorrin-2: step 1/1. The protein operates within porphyrin-containing compound metabolism; siroheme biosynthesis; precorrin-2 from uroporphyrinogen III: step 1/1. It functions in the pathway porphyrin-containing compound metabolism; siroheme biosynthesis; siroheme from sirohydrochlorin: step 1/1. Its pathway is porphyrin-containing compound metabolism; siroheme biosynthesis; sirohydrochlorin from precorrin-2: step 1/1. Its function is as follows. Multifunctional enzyme that catalyzes the SAM-dependent methylations of uroporphyrinogen III at position C-2 and C-7 to form precorrin-2 via precorrin-1. Then it catalyzes the NAD-dependent ring dehydrogenation of precorrin-2 to yield sirohydrochlorin. Finally, it catalyzes the ferrochelation of sirohydrochlorin to yield siroheme. This is Siroheme synthase from Hahella chejuensis (strain KCTC 2396).